The primary structure comprises 72 residues: Translation initiation factor IF-1 (72 aa).

The 72-residue stretch at 1-72 folds into the S1-like domain; it reads MSKEDSIEVT…TKGRITFRHR (72 aa).

The protein belongs to the IF-1 family. Component of the 30S ribosomal translation pre-initiation complex which assembles on the 30S ribosome in the order IF-2 and IF-3, IF-1 and N-formylmethionyl-tRNA(fMet); mRNA recruitment can occur at any time during PIC assembly.

The protein localises to the cytoplasm. Its function is as follows. One of the essential components for the initiation of protein synthesis. Stabilizes the binding of IF-2 and IF-3 on the 30S subunit to which N-formylmethionyl-tRNA(fMet) subsequently binds. Helps modulate mRNA selection, yielding the 30S pre-initiation complex (PIC). Upon addition of the 50S ribosomal subunit IF-1, IF-2 and IF-3 are released leaving the mature 70S translation initiation complex. The sequence is that of Translation initiation factor IF-1 from Solibacter usitatus (strain Ellin6076).